Here is a 100-residue protein sequence, read N- to C-terminus: Urease subunit gamma (100 aa).

Belongs to the urease gamma subunit family. Heterotrimer of UreA (gamma), UreB (beta) and UreC (alpha) subunits. Three heterotrimers associate to form the active enzyme.

The protein resides in the cytoplasm. It catalyses the reaction urea + 2 H2O + H(+) = hydrogencarbonate + 2 NH4(+). Its pathway is nitrogen metabolism; urea degradation; CO(2) and NH(3) from urea (urease route): step 1/1. The chain is Urease subunit gamma from Marinomonas sp. (strain MWYL1).